Reading from the N-terminus, the 140-residue chain is Putative nickel-responsive regulator 2 (140 aa).

Ni(2+) contacts are provided by His77, His88, His90, and Cys96.

It belongs to the transcriptional regulatory CopG/NikR family. The cofactor is Ni(2+).

Transcriptional regulator. The chain is Putative nickel-responsive regulator 2 from Methanothermobacter thermautotrophicus (strain ATCC 29096 / DSM 1053 / JCM 10044 / NBRC 100330 / Delta H) (Methanobacterium thermoautotrophicum).